A 327-amino-acid chain; its full sequence is Serpentine receptor class alpha-33 (327 aa).

The next 6 membrane-spanning stretches (helical) occupy residues 20–40, 56–76, 133–153, 186–206, 227–247, and 270–290; these read FSVYFIDTSCIISMAVTVLAI, LLITDLVFINIHNLSYIFLQN, FSHANYGFLLAILSLIASTVF, IIPYLAICLTSIVCSLLLIIY, AVVSSISVAILGIIQLVLFCF, and IIGWFYTSPLNAIISPTAVFL.

Belongs to the nematode receptor-like protein sra family.

The protein localises to the membrane. This is Serpentine receptor class alpha-33 (sra-33) from Caenorhabditis elegans.